Here is a 715-residue protein sequence, read N- to C-terminus: Fatty acid oxidation complex subunit alpha (715 aa).

The tract at residues 1–190 (MTTTSAFMLN…KAGLVDDVVP (190 aa)) is enoyl-CoA hydratase. The segment at 306–714 (GPLNSVGILG…FWTNGETDQG (409 aa)) is 3-hydroxyacyl-CoA dehydrogenase.

The protein in the N-terminal section; belongs to the enoyl-CoA hydratase/isomerase family. In the central section; belongs to the 3-hydroxyacyl-CoA dehydrogenase family. In terms of assembly, heterotetramer of two alpha chains (FadJ) and two beta chains (FadI).

It localises to the cytoplasm. The enzyme catalyses a (3S)-3-hydroxyacyl-CoA = a (2E)-enoyl-CoA + H2O. The catalysed reaction is a 4-saturated-(3S)-3-hydroxyacyl-CoA = a (3E)-enoyl-CoA + H2O. It catalyses the reaction a (3S)-3-hydroxyacyl-CoA + NAD(+) = a 3-oxoacyl-CoA + NADH + H(+). It carries out the reaction (3S)-3-hydroxybutanoyl-CoA = (3R)-3-hydroxybutanoyl-CoA. The protein operates within lipid metabolism; fatty acid beta-oxidation. Its function is as follows. Catalyzes the formation of a hydroxyacyl-CoA by addition of water on enoyl-CoA. Also exhibits 3-hydroxyacyl-CoA epimerase and 3-hydroxyacyl-CoA dehydrogenase activities. The protein is Fatty acid oxidation complex subunit alpha of Salmonella choleraesuis (strain SC-B67).